The chain runs to 280 residues: Homeobox protein Hox-B1b (280 aa).

Residues 46-65 form a disordered region; the sequence is GRLAAPTSAPHQSPGLPLHH. Positions 170–175 match the Antp-type hexapeptide motif; that stretch reads TFDWMK. Positions 195 to 254 form a DNA-binding region, homeobox; the sequence is HNVIRTNFTTKQLTELEKEFHFNKYLTRARRVEVAASLELNETQVKIWFQNRRMKQKKRE. A disordered region spans residues 249-280; the sequence is KQKKREKLGGVLVHREKASGPESSPKAKESEP. Residues 261-280 show a composition bias toward basic and acidic residues; the sequence is VHREKASGPESSPKAKESEP.

Belongs to the Antp homeobox family. Labial subfamily.

The protein localises to the nucleus. Sequence-specific transcription factor which is part of a developmental regulatory system that provides cells with specific positional identities on the anterior-posterior axis. The polypeptide is Homeobox protein Hox-B1b (hoxb1b) (Takifugu rubripes (Japanese pufferfish)).